We begin with the raw amino-acid sequence, 200 residues long: MERTELLKPRTLADLIRILHELFAGDEVNVEEVQAVLEAYESNPAEWALYAKFDQYRYTRNLVDQGNGKFNLMILCWGEGHGSSIHDHTDSHCFLKLLQGNLKETLFDWPDKKSNEMIKKSERTLRENQCAYINDSIGLHRVENVSHTEPAVSLHLYSPPFDTCHAFDQRTGHKNKVTMTFHSKFGIRTPFTTSGSLENN.

Fe cation-binding residues include H86, H88, and H140. Positions 93 to 157 (CFLKLLQGNL…TEPAVSLHLY (65 aa)) form a cross-link, 3'-(S-cysteinyl)-tyrosine (Cys-Tyr).

Belongs to the cysteine dioxygenase family. In terms of assembly, monomer. The cofactor is Fe(2+). Ni(2+) is required as a cofactor. Zn(2+) serves as cofactor. In terms of processing, the thioether cross-link between Cys-93 and Tyr-157 plays a structural role through stabilizing the Fe(2+) ion, and prevents the production of highly damaging free hydroxyl radicals by holding the oxygen radical via hydroxyl hydrogen. As to expression, highest expression in liver. Also expressed in kidney, lung, brain and small intestine.

It catalyses the reaction L-cysteine + O2 = 3-sulfino-L-alanine + H(+). It participates in organosulfur biosynthesis; taurine biosynthesis; hypotaurine from L-cysteine: step 1/2. Catalyzes the oxidation of cysteine to cysteine sulfinic acid with addition of molecular dioxygen. The sequence is that of Cysteine dioxygenase type 1 (Cdo1) from Mus musculus (Mouse).